We begin with the raw amino-acid sequence, 530 residues long: Autoinducer-2 kinase (530 aa).

The protein belongs to the FGGY kinase family.

Its subcellular location is the cytoplasm. It carries out the reaction (S)-4,5-dihydroxypentane-2,3-dione + ATP = (2S)-2-hydroxy-3,4-dioxopentyl phosphate + ADP + H(+). In terms of biological role, catalyzes the phosphorylation of autoinducer-2 (AI-2) to phospho-AI-2, which subsequently inactivates the transcriptional regulator LsrR and leads to the transcription of the lsr operon. Phosphorylates the ring-open form of (S)-4,5-dihydroxypentane-2,3-dione (DPD), which is the precursor to all AI-2 signaling molecules, at the C5 position. This is Autoinducer-2 kinase from Yersinia pestis bv. Antiqua (strain Antiqua).